A 406-amino-acid chain; its full sequence is Magnesium transporter NIPA4 (406 aa).

The Extracellular segment spans residues methionine 1–glycine 57. Asparagine 9, asparagine 14, and asparagine 42 each carry an N-linked (GlcNAc...) asparagine glycan. A helical membrane pass occupies residues phenylalanine 58–leucine 78. Topologically, residues lysine 79 to alanine 126 are cytoplasmic. A helical membrane pass occupies residues phenylalanine 127 to phenylalanine 147. At serine 148–serine 155 the chain is on the extracellular side. Residues leucine 156–isoleucine 176 form a helical membrane-spanning segment. Residues histidine 177–threonine 197 lie on the Cytoplasmic side of the membrane. The helical transmembrane segment at glycine 198 to alanine 218 threads the bilayer. Residues proline 219 to asparagine 225 are Extracellular-facing. A helical transmembrane segment spans residues isoleucine 226–glycine 246. The Cytoplasmic segment spans residues leucine 247 to histidine 263. The chain crosses the membrane as a helical span at residues proline 264–leucine 284. The Extracellular portion of the chain corresponds to asparagine 285–leucine 295. Asparagine 292 carries N-linked (GlcNAc...) asparagine glycosylation. The chain crosses the membrane as a helical span at residues valine 296 to phenylalanine 316. Over lysine 317 to aspartate 326 the chain is Cytoplasmic. A helical membrane pass occupies residues isoleucine 327–phenylalanine 347. Residues lysine 348–serine 406 are Extracellular-facing.

Belongs to the NIPA family.

The protein resides in the cell membrane. The enzyme catalyses Mg(2+)(in) = Mg(2+)(out). In terms of biological role, acts as a Mg(2+) transporter. Can also transport other divalent cations such as Ba(2+), Sr(2+) and Fe(2+) but to a much less extent than Mg(2+). May be a receptor for ligands (trioxilins A3 and B3) from the hepoxilin pathway. In Mus musculus (Mouse), this protein is Magnesium transporter NIPA4 (Nipal4).